Here is a 525-residue protein sequence, read N- to C-terminus: GMP synthase [glutamine-hydrolyzing] (525 aa).

The Glutamine amidotransferase type-1 domain maps to 8-206 (PLLILDFGSQ…VVDICKAPTE (199 aa)). The active-site Nucleophile is cysteine 85. Residues histidine 180 and glutamate 182 contribute to the active site. Residues 207-400 (WTPEHIIDEA…LGLPHDMVYR (194 aa)) form the GMPS ATP-PPase domain. 234-240 (SGGVDSS) lines the ATP pocket.

As to quaternary structure, homodimer.

It catalyses the reaction XMP + L-glutamine + ATP + H2O = GMP + L-glutamate + AMP + diphosphate + 2 H(+). It functions in the pathway purine metabolism; GMP biosynthesis; GMP from XMP (L-Gln route): step 1/1. In terms of biological role, catalyzes the synthesis of GMP from XMP. The protein is GMP synthase [glutamine-hydrolyzing] of Legionella pneumophila (strain Corby).